The following is a 599-amino-acid chain: Putative clathrin assembly protein At1g03050 (599 aa).

The ENTH domain occupies 26-162; it reads GRSASLSELD…DFRMQARHGK (137 aa). 2 disordered regions span residues 332-382 and 580-599; these read KQSK…PEEE and QGHMNLRQNQNQPYSYTPQY. Acidic residues-rich tracts occupy residues 341 to 359 and 373 to 382; these read ADEDDDEARTEEVNEEQED and EEDDVKPEEE. The segment covering 585–599 has biased composition (polar residues); it reads LRQNQNQPYSYTPQY.

The protein localises to the membrane. It is found in the clathrin-coated pit. It localises to the golgi apparatus. The protein resides in the cytoplasmic vesicle. Its subcellular location is the clathrin-coated vesicle. This chain is Putative clathrin assembly protein At1g03050, found in Arabidopsis thaliana (Mouse-ear cress).